Here is a 277-residue protein sequence, read N- to C-terminus: Phosphatidylglycerol--prolipoprotein diacylglyceryl transferase (277 aa).

Helical transmembrane passes span 11-31 (IIFS…LISF), 55-75 (LLYI…IIFY), 93-113 (GGMS…YLSL), and 117-137 (VKIL…LGAG). Arg138 contributes to the a 1,2-diacyl-sn-glycero-3-phospho-(1'-sn-glycerol) binding site. The next 3 membrane-spanning stretches (helical) occupy residues 192–212 (PSQL…IYFF), 220–240 (GSIS…SEFF), and 256–276 (MGQI…NLFI).

Belongs to the Lgt family.

The protein resides in the cell inner membrane. The catalysed reaction is L-cysteinyl-[prolipoprotein] + a 1,2-diacyl-sn-glycero-3-phospho-(1'-sn-glycerol) = an S-1,2-diacyl-sn-glyceryl-L-cysteinyl-[prolipoprotein] + sn-glycerol 1-phosphate + H(+). Its pathway is protein modification; lipoprotein biosynthesis (diacylglyceryl transfer). In terms of biological role, catalyzes the transfer of the diacylglyceryl group from phosphatidylglycerol to the sulfhydryl group of the N-terminal cysteine of a prolipoprotein, the first step in the formation of mature lipoproteins. The sequence is that of Phosphatidylglycerol--prolipoprotein diacylglyceryl transferase from Buchnera aphidicola subsp. Schizaphis graminum (strain Sg).